We begin with the raw amino-acid sequence, 522 residues long: Lysine--tRNA ligase (522 aa).

The 'HIGH' region motif lies at 44-52 (PSGLPHIGT). Positions 290–294 (KISKS) match the 'KMSKS' region motif. K293 contacts ATP.

It belongs to the class-I aminoacyl-tRNA synthetase family.

The protein localises to the cytoplasm. It carries out the reaction tRNA(Lys) + L-lysine + ATP = L-lysyl-tRNA(Lys) + AMP + diphosphate. This Rickettsia conorii (strain ATCC VR-613 / Malish 7) protein is Lysine--tRNA ligase.